We begin with the raw amino-acid sequence, 553 residues long: Chaperonin GroEL (553 aa).

Residues 30-33, K51, 87-91, G416, and D496 contribute to the ATP site; these read TLGP and DGTTT.

The protein belongs to the chaperonin (HSP60) family. In terms of assembly, forms a cylinder of 14 subunits composed of two heptameric rings stacked back-to-back. Interacts with the co-chaperonin GroES.

It is found in the cytoplasm. It catalyses the reaction ATP + H2O + a folded polypeptide = ADP + phosphate + an unfolded polypeptide.. Functionally, together with its co-chaperonin GroES, plays an essential role in assisting protein folding. The GroEL-GroES system forms a nano-cage that allows encapsulation of the non-native substrate proteins and provides a physical environment optimized to promote and accelerate protein folding. The chain is Chaperonin GroEL from Alkalilimnicola ehrlichii (strain ATCC BAA-1101 / DSM 17681 / MLHE-1).